A 382-amino-acid chain; its full sequence is D-galactonate dehydratase (382 aa).

Asp183 lines the Mg(2+) pocket. Residue His185 is the Proton donor of the active site. 2 residues coordinate Mg(2+): Glu209 and Glu235. The active-site Proton acceptor is the His285.

This sequence belongs to the mandelate racemase/muconate lactonizing enzyme family. GalD subfamily. The cofactor is Mg(2+).

The catalysed reaction is D-galactonate = 2-dehydro-3-deoxy-D-galactonate + H2O. Its pathway is carbohydrate acid metabolism; D-galactonate degradation; D-glyceraldehyde 3-phosphate and pyruvate from D-galactonate: step 1/3. Its function is as follows. Catalyzes the dehydration of D-galactonate to 2-keto-3-deoxy-D-galactonate. The chain is D-galactonate dehydratase from Salmonella choleraesuis (strain SC-B67).